We begin with the raw amino-acid sequence, 189 residues long: FAS1 domain-containing protein mug57 (189 aa).

The signal sequence occupies residues 1–24; sequence MMKLFCLNIFRFLYTTSFISAVLS. The 146-residue stretch at 37-182 folds into the FAS1 domain; it reads EPRLFELLAE…GEMWVLNATL (146 aa).

The protein resides in the cytoplasm. It is found in the nucleus. It localises to the membrane. Functionally, has a role in sporulation. This Schizosaccharomyces pombe (strain 972 / ATCC 24843) (Fission yeast) protein is FAS1 domain-containing protein mug57 (mug57).